The following is a 617-amino-acid chain: UvrABC system protein C (617 aa).

Residues 22–100 (KLPGVYRFFD…IKALSPKYNI (79 aa)) form the GIY-YIG domain. The UVR domain maps to 209 to 244 (DELTRTLQHKMQTAAANLQFEEAARYRDQIQALGIM).

The protein belongs to the UvrC family. In terms of assembly, interacts with UvrB in an incision complex.

It localises to the cytoplasm. In terms of biological role, the UvrABC repair system catalyzes the recognition and processing of DNA lesions. UvrC both incises the 5' and 3' sides of the lesion. The N-terminal half is responsible for the 3' incision and the C-terminal half is responsible for the 5' incision. This chain is UvrABC system protein C, found in Neisseria meningitidis serogroup A / serotype 4A (strain DSM 15465 / Z2491).